We begin with the raw amino-acid sequence, 480 residues long: Aspartyl/glutamyl-tRNA(Asn/Gln) amidotransferase subunit B (480 aa).

It belongs to the GatB/GatE family. GatB subfamily. In terms of assembly, heterotrimer of A, B and C subunits.

It carries out the reaction L-glutamyl-tRNA(Gln) + L-glutamine + ATP + H2O = L-glutaminyl-tRNA(Gln) + L-glutamate + ADP + phosphate + H(+). It catalyses the reaction L-aspartyl-tRNA(Asn) + L-glutamine + ATP + H2O = L-asparaginyl-tRNA(Asn) + L-glutamate + ADP + phosphate + 2 H(+). In terms of biological role, allows the formation of correctly charged Asn-tRNA(Asn) or Gln-tRNA(Gln) through the transamidation of misacylated Asp-tRNA(Asn) or Glu-tRNA(Gln) in organisms which lack either or both of asparaginyl-tRNA or glutaminyl-tRNA synthetases. The reaction takes place in the presence of glutamine and ATP through an activated phospho-Asp-tRNA(Asn) or phospho-Glu-tRNA(Gln). This chain is Aspartyl/glutamyl-tRNA(Asn/Gln) amidotransferase subunit B, found in Caldicellulosiruptor bescii (strain ATCC BAA-1888 / DSM 6725 / KCTC 15123 / Z-1320) (Anaerocellum thermophilum).